Reading from the N-terminus, the 335-residue chain is Holliday junction branch migration complex subunit RuvB (335 aa).

The tract at residues 4 to 184 is large ATPase domain (RuvB-L); it reads ADRIISSNAQ…FGIVQRLEFY (181 aa). Residues isoleucine 23, arginine 24, glycine 65, lysine 68, threonine 69, threonine 70, 131 to 133, arginine 174, tyrosine 184, and arginine 221 each bind ATP; that span reads EDY. Residue threonine 69 coordinates Mg(2+). Positions 185 to 255 are small ATPAse domain (RuvB-S); sequence SVEDLTSIVA…IAKSALSMLD (71 aa). Residues 258–335 form a head domain (RuvB-H) region; it reads QAGFDYLDRK…RHFGLDKLTE (78 aa). Residues arginine 294, arginine 313, and arginine 318 each contribute to the DNA site.

This sequence belongs to the RuvB family. As to quaternary structure, homohexamer. Forms an RuvA(8)-RuvB(12)-Holliday junction (HJ) complex. HJ DNA is sandwiched between 2 RuvA tetramers; dsDNA enters through RuvA and exits via RuvB. An RuvB hexamer assembles on each DNA strand where it exits the tetramer. Each RuvB hexamer is contacted by two RuvA subunits (via domain III) on 2 adjacent RuvB subunits; this complex drives branch migration. In the full resolvosome a probable DNA-RuvA(4)-RuvB(12)-RuvC(2) complex forms which resolves the HJ.

The protein resides in the cytoplasm. The catalysed reaction is ATP + H2O = ADP + phosphate + H(+). Its function is as follows. The RuvA-RuvB-RuvC complex processes Holliday junction (HJ) DNA during genetic recombination and DNA repair, while the RuvA-RuvB complex plays an important role in the rescue of blocked DNA replication forks via replication fork reversal (RFR). RuvA specifically binds to HJ cruciform DNA, conferring on it an open structure. The RuvB hexamer acts as an ATP-dependent pump, pulling dsDNA into and through the RuvAB complex. RuvB forms 2 homohexamers on either side of HJ DNA bound by 1 or 2 RuvA tetramers; 4 subunits per hexamer contact DNA at a time. Coordinated motions by a converter formed by DNA-disengaged RuvB subunits stimulates ATP hydrolysis and nucleotide exchange. Immobilization of the converter enables RuvB to convert the ATP-contained energy into a lever motion, pulling 2 nucleotides of DNA out of the RuvA tetramer per ATP hydrolyzed, thus driving DNA branch migration. The RuvB motors rotate together with the DNA substrate, which together with the progressing nucleotide cycle form the mechanistic basis for DNA recombination by continuous HJ branch migration. Branch migration allows RuvC to scan DNA until it finds its consensus sequence, where it cleaves and resolves cruciform DNA. This Mannheimia succiniciproducens (strain KCTC 0769BP / MBEL55E) protein is Holliday junction branch migration complex subunit RuvB.